Reading from the N-terminus, the 241-residue chain is Methylthioribulose-1-phosphate dehydratase (241 aa).

Polar residues predominate over residues 1-11; the sequence is MSSLCDTSNGE. Residues 1-20 form a disordered region; it reads MSSLCDTSNGESHADPCQDK. Position 96 (Cys96) interacts with substrate. The Zn(2+) site is built by His114 and His116. The active-site Proton donor/acceptor is the Glu138. Position 194 (His194) interacts with Zn(2+).

Belongs to the aldolase class II family. MtnB subfamily. Requires Zn(2+) as cofactor.

The protein resides in the cytoplasm. The enzyme catalyses 5-(methylsulfanyl)-D-ribulose 1-phosphate = 5-methylsulfanyl-2,3-dioxopentyl phosphate + H2O. It functions in the pathway amino-acid biosynthesis; L-methionine biosynthesis via salvage pathway; L-methionine from S-methyl-5-thio-alpha-D-ribose 1-phosphate: step 2/6. Catalyzes the dehydration of methylthioribulose-1-phosphate (MTRu-1-P) into 2,3-diketo-5-methylthiopentyl-1-phosphate (DK-MTP-1-P). Functions in the methionine salvage pathway. May play a role in apoptosis. The sequence is that of Methylthioribulose-1-phosphate dehydratase from Osmerus mordax (Rainbow smelt).